The chain runs to 467 residues: Cysteine--tRNA ligase (467 aa).

C29 provides a ligand contact to Zn(2+). Residues 31 to 41 (PTVYDDSHLGH) carry the 'HIGH' region motif. Residues 155–174 (KLSGRGEDLEQVSRIESSEE) form a disordered region. Basic and acidic residues predominate over residues 158 to 174 (GRGEDLEQVSRIESSEE). Zn(2+)-binding residues include C210, H239, and E243. The 'KMSKS' region signature appears at 271–275 (KMSKS). K274 provides a ligand contact to ATP.

It belongs to the class-I aminoacyl-tRNA synthetase family. In terms of assembly, monomer. Zn(2+) is required as a cofactor.

The protein localises to the cytoplasm. It catalyses the reaction tRNA(Cys) + L-cysteine + ATP = L-cysteinyl-tRNA(Cys) + AMP + diphosphate. This chain is Cysteine--tRNA ligase, found in Wolinella succinogenes (strain ATCC 29543 / DSM 1740 / CCUG 13145 / JCM 31913 / LMG 7466 / NCTC 11488 / FDC 602W) (Vibrio succinogenes).